Reading from the N-terminus, the 134-residue chain is Small ribosomal subunit protein uS12 (134 aa).

Residue Asp-89 is modified to 3-methylthioaspartic acid. The interval 103–134 (DTAGVKDRKQGRSKYGAKRPKPGEAAATGKKK) is disordered. A compositionally biased stretch (basic residues) spans 113–122 (GRSKYGAKRP).

This sequence belongs to the universal ribosomal protein uS12 family. Part of the 30S ribosomal subunit. Contacts proteins S8 and S17. May interact with IF1 in the 30S initiation complex.

Functionally, with S4 and S5 plays an important role in translational accuracy. In terms of biological role, interacts with and stabilizes bases of the 16S rRNA that are involved in tRNA selection in the A site and with the mRNA backbone. Located at the interface of the 30S and 50S subunits, it traverses the body of the 30S subunit contacting proteins on the other side and probably holding the rRNA structure together. The combined cluster of proteins S8, S12 and S17 appears to hold together the shoulder and platform of the 30S subunit. This chain is Small ribosomal subunit protein uS12, found in Thermosynechococcus vestitus (strain NIES-2133 / IAM M-273 / BP-1).